The sequence spans 428 residues: Glutamate-1-semialdehyde 2,1-aminomutase (428 aa).

The residue at position 266 (Lys-266) is an N6-(pyridoxal phosphate)lysine.

It belongs to the class-III pyridoxal-phosphate-dependent aminotransferase family. HemL subfamily. In terms of assembly, homodimer. Requires pyridoxal 5'-phosphate as cofactor.

It localises to the cytoplasm. It catalyses the reaction (S)-4-amino-5-oxopentanoate = 5-aminolevulinate. Its pathway is porphyrin-containing compound metabolism; protoporphyrin-IX biosynthesis; 5-aminolevulinate from L-glutamyl-tRNA(Glu): step 2/2. This Herminiimonas arsenicoxydans protein is Glutamate-1-semialdehyde 2,1-aminomutase.